The following is a 470-amino-acid chain: GDP-Man:Man(3)GlcNAc(2)-PP-Dol alpha-1,2-mannosyltransferase (470 aa).

Topologically, residues 1-15 (MSDTVISLISHSITT) are lumenal. The chain crosses the membrane as a helical span at residues 16–36 (VFYLVPLIIALIIPFSLYSGF). The Cytoplasmic portion of the chain corresponds to 37–131 (RRKSKTVAFF…HYKHCTMLFQ (95 aa)). An intramembrane region (helical) is located at residues 132–152 (ALAGLILALEAWFRMVPAVFI). The Cytoplasmic segment spans residues 153-378 (DSMGYPLSLP…ISIHTMHNEH (226 aa)). The segment at residues 379–399 (FGISVVEAMAASTIILSNDSG) is an intramembrane region (helical). Residues 400 to 470 (GPRMDIVKDY…HWNKEIEKVL (71 aa)) lie on the Cytoplasmic side of the membrane.

The protein belongs to the glycosyltransferase group 1 family. Glycosyltransferase 4 subfamily.

The protein resides in the endoplasmic reticulum membrane. The catalysed reaction is an alpha-D-Man-(1-&gt;3)-[alpha-D-Man-(1-&gt;6)]-beta-D-Man-(1-&gt;4)-beta-D-GlcNAc-(1-&gt;4)-alpha-D-GlcNAc-diphospho-di-trans,poly-cis-dolichol + 2 GDP-alpha-D-mannose = an alpha-D-Man-(1-&gt;2)-alpha-D-Man-(1-&gt;2)-alpha-D-Man-(1-&gt;3)-[alpha-D-Man-(1-&gt;6)]-beta-D-Man-(1-&gt;4)-beta-D-GlcNAc-(1-&gt;4)-alpha-D-GlcNAc-diphospho-di-trans,poly-cis-dolichol + 2 GDP + 2 H(+). Its pathway is protein modification; protein glycosylation. Its function is as follows. GDP-Man:Man(3)GlcNAc(2)-PP-Dol alpha-1,2-mannosyltransferase that operates in the biosynthetic pathway of dolichol-linked oligosaccharides, the glycan precursors employed in protein asparagine (N)-glycosylation. The assembly of dolichol-linked oligosaccharides begins on the cytosolic side of the endoplasmic reticulum membrane and finishes in its lumen. The sequential addition of sugars to dolichol pyrophosphate produces dolichol-linked oligosaccharides containing fourteen sugars, including two GlcNAcs, nine mannoses and three glucoses. Once assembled, the oligosaccharide is transferred from the lipid to nascent proteins by oligosaccharyltransferases. Catalyzes, on the cytoplasmic face of the endoplasmic reticulum, the addition of the fourth and fifth mannose residues to the dolichol-linked oligosaccharide chain, to produce Man(5)GlcNAc(2)-PP-dolichol core oligosaccharide. Man(5)GlcNAc(2)-PP-dolichol is a substrate for ALG3, the following enzyme in the biosynthetic pathway. This Caenorhabditis elegans protein is GDP-Man:Man(3)GlcNAc(2)-PP-Dol alpha-1,2-mannosyltransferase.